We begin with the raw amino-acid sequence, 338 residues long: Protein FosB (338 aa).

Disordered regions lie at residues 1 to 54 (MFQA…PGSF), 79 to 191 (MAQS…DQLE), 222 to 276 (CKIP…PPNL), and 316 to 338 (GAQR…LLAL). Polar residues-rich tracts occupy residues 13-31 (SRCS…SVDS) and 79-88 (MAQSQGQPLA). The residue at position 27 (Ser-27) is a Phosphoserine. Residues 113–124 (SSGGASGSGGPS) are compositionally biased toward gly residues. Over residues 125-137 (TSGTTSGPGPARP) the composition is skewed to low complexity. In terms of domain architecture, bZIP spans 155-218 (EEKRRVRRER…ERLEFVLVAH (64 aa)). Residues 157 to 182 (KRRVRRERNKLAAAKCRNRRRELTDR) are basic motif. Residues 183-211 (LQAETDQLEEEKAELESEIAELQKEKERL) are leucine-zipper. The segment covering 256–265 (LPPPPPPPLP) has biased composition (pro residues). Polar residues-rich tracts occupy residues 266–276 (FQTSQDAPPNL) and 318–338 (QRTS…LLAL).

The protein belongs to the bZIP family. Fos subfamily. In terms of assembly, heterodimer; binds to DNA as heterodimer. Component of an AP-1 transcription factor complex; composed of FOS-JUN heterodimers. As part of the AP-1 transcription factor complex, forms heterodimers with JUN, JUNB or JUND, thereby binding to the AP-1 consensus sequence and stimulating transcription. Interacts with the BAF multiprotein chromatin-remodeling complex subunits SMARCB1 and SMARCD1. Interacts with ARID1A and JUN. Homodimer under oxidizing conditions and monomer under reducing conditions (in vitro). Heterodimer; binds to DNA as heterodimer. Forms heterodimers with JUNB, JUN or JUND; thereby binding to the AP-1 consensus sequence but does not stimulate transcription. Forms heterodimers with JUND under oxidizing conditions. In terms of processing, phosphorylated. Post-translationally, phosphorylated at Ser-27 by CSNK2A1; phosphorylation increases protein stability and transactivation potential. Expressed in the nucleus accumbens of the striatum (at protein level).

The protein resides in the nucleus. Functionally, heterodimerizes with proteins of the JUN family to form an AP-1 transcription factor complex, thereby enhancing their DNA binding activity to gene promoters containing an AP-1 consensus sequence 5'-TGA[GC]TCA-3' and enhancing their transcriptional activity. As part of the AP-1 complex, facilitates enhancer selection together with cell-type-specific transcription factors by collaboratively binding to nucleosomal enhancers and recruiting the SWI/SNF (BAF) chromatin remodeling complex to establish accessible chromatin. Together with JUN, plays a role in activation-induced cell death of T cells by binding to the AP-1 promoter site of FASLG/CD95L, and inducing its transcription in response to activation of the TCR/CD3 signaling pathway. Exhibits transactivation activity in vitro. Involved in the display of nurturing behavior towards newborns. May play a role in neurogenesis in the hippocampus and in learning and memory-related tasks by regulating the expression of various genes involved in neurogenesis, depression and epilepsy. Implicated in behavioral responses related to morphine reward and spatial memory. Exhibits lower transactivation activity than isoform 1 in vitro. The heterodimer with JUN does not display any transcriptional activity, and may thereby act as an transcriptional inhibitor. May be involved in the regulation of neurogenesis in the hippocampus. May play a role in synaptic modifications in nucleus accumbens medium spiny neurons and thereby play a role in adaptive and pathological reward-dependent learning, including maladaptive responses involved in drug addiction. Seems to be more stably expressed with a half-life of ~9.5 hours in cell culture as compared to 1.5 hours half-life of isoform 1. This Homo sapiens (Human) protein is Protein FosB (FOSB).